Reading from the N-terminus, the 374-residue chain is Chaperone protein DnaJ (374 aa).

In terms of domain architecture, J spans 5–70 (DYYEVLGVNL…RKRASYDQFG (66 aa)). The segment at 133–210 (GLSRTIKVPT…CHGQGRQQQT (78 aa)) adopts a CR-type zinc-finger fold. Zn(2+) contacts are provided by Cys146, Cys149, Cys162, Cys165, Cys184, Cys187, Cys198, and Cys201. 4 CXXCXGXG motif repeats span residues 146-153 (CKTCNGSG), 162-169 (CPRCNGSG), 184-191 (CSVCRGRG), and 198-205 (CTDCHGQG).

Belongs to the DnaJ family. As to quaternary structure, homodimer. It depends on Zn(2+) as a cofactor.

The protein resides in the cytoplasm. In terms of biological role, participates actively in the response to hyperosmotic and heat shock by preventing the aggregation of stress-denatured proteins and by disaggregating proteins, also in an autonomous, DnaK-independent fashion. Unfolded proteins bind initially to DnaJ; upon interaction with the DnaJ-bound protein, DnaK hydrolyzes its bound ATP, resulting in the formation of a stable complex. GrpE releases ADP from DnaK; ATP binding to DnaK triggers the release of the substrate protein, thus completing the reaction cycle. Several rounds of ATP-dependent interactions between DnaJ, DnaK and GrpE are required for fully efficient folding. Also involved, together with DnaK and GrpE, in the DNA replication of plasmids through activation of initiation proteins. This is Chaperone protein DnaJ from Coxiella burnetii (strain RSA 331 / Henzerling II).